The following is a 239-amino-acid chain: Dolichyldiphosphatase (239 aa).

The Lumenal portion of the chain corresponds to Met-1–Ser-34. Residues Ala-35–Thr-55 form a helical membrane-spanning segment. Residues Arg-56–Asn-131 are Cytoplasmic-facing. The chain crosses the membrane as a helical span at residues Phe-132–Ser-152. The Lumenal portion of the chain corresponds to Arg-153 to Val-164. Residues Ile-165–Ile-185 traverse the membrane as a helical segment. Over Arg-186–Asp-239 the chain is Cytoplasmic.

This sequence belongs to the dolichyldiphosphatase family.

Its subcellular location is the endoplasmic reticulum membrane. The catalysed reaction is a di-trans,poly-cis-dolichyl diphosphate + H2O = a di-trans,poly-cis-dolichyl phosphate + phosphate + H(+). Its pathway is protein modification; protein glycosylation. In terms of biological role, non-essential protein which is required for efficient N-glycosylation. Necessary for maintaining optimal levels of dolichol-linked oligosaccharides. Hydrolyzes dolichyl pyrophosphate at a very high rate and dolichyl monophosphate at a much lower rate. Does not act on phosphatidate. The chain is Dolichyldiphosphatase (CAX4) from Saccharomyces cerevisiae (strain ATCC 204508 / S288c) (Baker's yeast).